A 402-amino-acid chain; its full sequence is Arabinosyltransferase RRA1 (402 aa).

Residues 1–13 (MAVRKEKVQPFRE) lie on the Cytoplasmic side of the membrane. The helical; Signal-anchor for type II membrane protein transmembrane segment at 14–34 (CGIAIAVLVGIFIGCVCTILI) threads the bilayer. At 35-402 (PNDFVNFRSS…DALDRFRDGS (368 aa)) the chain is on the lumenal side. The DXD motif signature appears at 225–227 (DVD). The N-linked (GlcNAc...) asparagine glycan is linked to N253.

It belongs to the glycosyltransferase 77 family. As to expression, expressed in leaf meristem and at points of cauline leaf attachments on the primary stem. Expressed at low levels in siliques.

Its subcellular location is the golgi apparatus membrane. Its function is as follows. Plays a role in the arabinosylation of cell wall components. Involved in the arabinosylation of extensin proteins in root hair cells. Extensins are structural glycoproteins present in cell walls and its arabinosylation is important for root hair cell development. This chain is Arabinosyltransferase RRA1, found in Arabidopsis thaliana (Mouse-ear cress).